The primary structure comprises 428 residues: Enolase (428 aa).

Gln162 lines the (2R)-2-phosphoglycerate pocket. The Proton donor role is filled by Glu204. Mg(2+) contacts are provided by Asp241, Glu288, and Asp315. (2R)-2-phosphoglycerate contacts are provided by Lys340, Arg369, Ser370, and Lys391. Lys340 serves as the catalytic Proton acceptor.

This sequence belongs to the enolase family. Mg(2+) serves as cofactor.

It localises to the cytoplasm. The protein localises to the secreted. The protein resides in the cell surface. It catalyses the reaction (2R)-2-phosphoglycerate = phosphoenolpyruvate + H2O. The protein operates within carbohydrate degradation; glycolysis; pyruvate from D-glyceraldehyde 3-phosphate: step 4/5. Its function is as follows. Catalyzes the reversible conversion of 2-phosphoglycerate (2-PG) into phosphoenolpyruvate (PEP). It is essential for the degradation of carbohydrates via glycolysis. This Azobacteroides pseudotrichonymphae genomovar. CFP2 protein is Enolase.